A 375-amino-acid chain; its full sequence is Flagellar P-ring protein (375 aa).

The N-terminal stretch at 1–23 (MFNQSFLKYMLFGFFLFSFHAHA) is a signal peptide.

This sequence belongs to the FlgI family. As to quaternary structure, the basal body constitutes a major portion of the flagellar organelle and consists of four rings (L,P,S, and M) mounted on a central rod.

It is found in the bacterial flagellum basal body. In terms of biological role, assembles around the rod to form the L-ring and probably protects the motor/basal body from shearing forces during rotation. This chain is Flagellar P-ring protein, found in Buchnera aphidicola subsp. Baizongia pistaciae (strain Bp).